Here is a 258-residue protein sequence, read N- to C-terminus: Type III pantothenate kinase (258 aa).

6 to 13 contributes to the ATP binding site; that stretch reads DVGNTNTV. Residues tyrosine 100 and 107 to 110 contribute to the substrate site; that span reads GADR. Aspartate 109 serves as the catalytic Proton acceptor. Aspartate 129 is a binding site for K(+). Threonine 132 lines the ATP pocket. Substrate is bound at residue threonine 184.

The protein belongs to the type III pantothenate kinase family. Homodimer. It depends on NH4(+) as a cofactor. Requires K(+) as cofactor.

The protein localises to the cytoplasm. The enzyme catalyses (R)-pantothenate + ATP = (R)-4'-phosphopantothenate + ADP + H(+). It participates in cofactor biosynthesis; coenzyme A biosynthesis; CoA from (R)-pantothenate: step 1/5. In terms of biological role, catalyzes the phosphorylation of pantothenate (Pan), the first step in CoA biosynthesis. The chain is Type III pantothenate kinase from Geobacillus kaustophilus (strain HTA426).